The following is a 473-amino-acid chain: 3-isopropylmalate dehydratase large subunit (473 aa).

[4Fe-4S] cluster-binding residues include Cys-354, Cys-414, and Cys-417.

Belongs to the aconitase/IPM isomerase family. LeuC type 1 subfamily. In terms of assembly, heterodimer of LeuC and LeuD. Requires [4Fe-4S] cluster as cofactor.

It catalyses the reaction (2R,3S)-3-isopropylmalate = (2S)-2-isopropylmalate. It functions in the pathway amino-acid biosynthesis; L-leucine biosynthesis; L-leucine from 3-methyl-2-oxobutanoate: step 2/4. In terms of biological role, catalyzes the isomerization between 2-isopropylmalate and 3-isopropylmalate, via the formation of 2-isopropylmaleate. The sequence is that of 3-isopropylmalate dehydratase large subunit from Rhodopseudomonas palustris (strain BisB18).